Here is a 301-residue protein sequence, read N- to C-terminus: Acetylglutamate kinase (301 aa).

Substrate contacts are provided by residues 76-77 (GG), Arg98, and Asn192.

Belongs to the acetylglutamate kinase family. ArgB subfamily.

It localises to the cytoplasm. It carries out the reaction N-acetyl-L-glutamate + ATP = N-acetyl-L-glutamyl 5-phosphate + ADP. It participates in amino-acid biosynthesis; L-arginine biosynthesis; N(2)-acetyl-L-ornithine from L-glutamate: step 2/4. Catalyzes the ATP-dependent phosphorylation of N-acetyl-L-glutamate. This chain is Acetylglutamate kinase, found in Chlorobaculum parvum (strain DSM 263 / NCIMB 8327) (Chlorobium vibrioforme subsp. thiosulfatophilum).